We begin with the raw amino-acid sequence, 191 residues long: Pyridoxal 5'-phosphate synthase subunit PdxT (191 aa).

48–50 contacts L-glutamine; sequence GES. Cys79 functions as the Nucleophile in the catalytic mechanism. L-glutamine-binding positions include Arg106 and 134–135; that span reads IR. Catalysis depends on charge relay system residues His170 and Glu172.

The protein belongs to the glutaminase PdxT/SNO family. In the presence of PdxS, forms a dodecamer of heterodimers. Only shows activity in the heterodimer.

The catalysed reaction is aldehydo-D-ribose 5-phosphate + D-glyceraldehyde 3-phosphate + L-glutamine = pyridoxal 5'-phosphate + L-glutamate + phosphate + 3 H2O + H(+). The enzyme catalyses L-glutamine + H2O = L-glutamate + NH4(+). Its pathway is cofactor biosynthesis; pyridoxal 5'-phosphate biosynthesis. Functionally, catalyzes the hydrolysis of glutamine to glutamate and ammonia as part of the biosynthesis of pyridoxal 5'-phosphate. The resulting ammonia molecule is channeled to the active site of PdxS. This chain is Pyridoxal 5'-phosphate synthase subunit PdxT, found in Oenococcus oeni (strain ATCC BAA-331 / PSU-1).